We begin with the raw amino-acid sequence, 397 residues long: MFHRIEEALEDLKQGKVVIVCDDENRENEGDFIALAEYITPETINFMITHGRGLVCVPITEGYAERLQLEPMVSHNTDSHHTAFTVSIDHVSTTTGISAHERATTIQELLNPASKGTDFNRPGHIFPLIAKEGGVLRRAGHTEAAVDLAKLCGAEPAGVICEIINEDGTMARVPDLIECAKQFDIKMITIEDLIAYRRHHETLVTREVEITLPTDFGTFHAIGYSNSLDTKEHIALVKGDISIGEPVLVRVHSECLTGDVFGSHRCDCGPQLHAALAQIEREGKGVLLYMRQEGRGIGLLNKLRAYKLQEEGFDTVEANEKLGFPADLRDYGIGAQILKDLGLQSLRLLTNNPRKIAGLQGYDLEVVERVPLQMPAKEENKSYLQTKVNKLGHLLNL.

The tract at residues 1–199 is DHBP synthase; that stretch reads MFHRIEEALE…IEDLIAYRRH (199 aa). D-ribulose 5-phosphate-binding positions include 26 to 27, Asp31, 138 to 142, and Glu162; these read RE and RAGHT. Glu27 contributes to the Mg(2+) binding site. His141 contacts Mg(2+). The interval 200–397 is GTP cyclohydrolase II; that stretch reads HETLVTREVE…VNKLGHLLNL (198 aa). 250 to 254 lines the GTP pocket; that stretch reads RVHSE. Zn(2+) is bound by residues Cys255, Cys266, and Cys268. GTP contacts are provided by residues Gln271, 293–295, and Thr315; that span reads EGR. Asp327 functions as the Proton acceptor; for GTP cyclohydrolase activity in the catalytic mechanism. The active-site Nucleophile; for GTP cyclohydrolase activity is the Arg329. 2 residues coordinate GTP: Thr350 and Lys355.

It in the N-terminal section; belongs to the DHBP synthase family. In the C-terminal section; belongs to the GTP cyclohydrolase II family. The cofactor is Mg(2+). Requires Mn(2+) as cofactor. Zn(2+) is required as a cofactor.

It catalyses the reaction D-ribulose 5-phosphate = (2S)-2-hydroxy-3-oxobutyl phosphate + formate + H(+). It carries out the reaction GTP + 4 H2O = 2,5-diamino-6-hydroxy-4-(5-phosphoribosylamino)-pyrimidine + formate + 2 phosphate + 3 H(+). Its pathway is cofactor biosynthesis; riboflavin biosynthesis; 2-hydroxy-3-oxobutyl phosphate from D-ribulose 5-phosphate: step 1/1. The protein operates within cofactor biosynthesis; riboflavin biosynthesis; 5-amino-6-(D-ribitylamino)uracil from GTP: step 1/4. Its function is as follows. Catalyzes the conversion of D-ribulose 5-phosphate to formate and 3,4-dihydroxy-2-butanone 4-phosphate. Functionally, catalyzes the conversion of GTP to 2,5-diamino-6-ribosylamino-4(3H)-pyrimidinone 5'-phosphate (DARP), formate and pyrophosphate. The protein is Riboflavin biosynthesis protein RibBA of Bacillus cereus (strain G9842).